We begin with the raw amino-acid sequence, 295 residues long: ATP synthase gamma chain (295 aa).

Belongs to the ATPase gamma chain family. F-type ATPases have 2 components, CF(1) - the catalytic core - and CF(0) - the membrane proton channel. CF(1) has five subunits: alpha(3), beta(3), gamma(1), delta(1), epsilon(1). CF(0) has three main subunits: a, b and c.

Its subcellular location is the cell inner membrane. Produces ATP from ADP in the presence of a proton gradient across the membrane. The gamma chain is believed to be important in regulating ATPase activity and the flow of protons through the CF(0) complex. This Campylobacter fetus subsp. fetus (strain 82-40) protein is ATP synthase gamma chain.